Consider the following 184-residue polypeptide: GTP cyclohydrolase 1 (184 aa).

Zn(2+) contacts are provided by C75, H78, and C146.

Belongs to the GTP cyclohydrolase I family. Homomer.

It catalyses the reaction GTP + H2O = 7,8-dihydroneopterin 3'-triphosphate + formate + H(+). It participates in cofactor biosynthesis; 7,8-dihydroneopterin triphosphate biosynthesis; 7,8-dihydroneopterin triphosphate from GTP: step 1/1. The sequence is that of GTP cyclohydrolase 1 from Streptococcus pneumoniae (strain Hungary19A-6).